We begin with the raw amino-acid sequence, 75 residues long: Small ribosomal subunit protein eS28 (75 aa).

The protein belongs to the eukaryotic ribosomal protein eS28 family.

The polypeptide is Small ribosomal subunit protein eS28 (Natronomonas pharaonis (strain ATCC 35678 / DSM 2160 / CIP 103997 / JCM 8858 / NBRC 14720 / NCIMB 2260 / Gabara) (Halobacterium pharaonis)).